The following is a 93-amino-acid chain: Small ribosomal subunit protein uS19 (93 aa).

The protein belongs to the universal ribosomal protein uS19 family.

Its function is as follows. Protein S19 forms a complex with S13 that binds strongly to the 16S ribosomal RNA. The sequence is that of Small ribosomal subunit protein uS19 from Ligilactobacillus salivarius (strain UCC118) (Lactobacillus salivarius).